Reading from the N-terminus, the 141-residue chain is Galactose-6-phosphate isomerase subunit LacA (141 aa).

It belongs to the LacAB/RpiB family. Heteromultimeric protein consisting of LacA and LacB.

The enzyme catalyses aldehydo-D-galactose 6-phosphate = keto-D-tagatose 6-phosphate. It functions in the pathway carbohydrate metabolism; D-galactose 6-phosphate degradation; D-tagatose 6-phosphate from D-galactose 6-phosphate: step 1/1. In Streptococcus equi subsp. zooepidemicus (strain MGCS10565), this protein is Galactose-6-phosphate isomerase subunit LacA.